A 142-amino-acid chain; its full sequence is MDGGSLRASPAAMDGGALEPAQQLSSLEGWTGQDRLLIPRWREARSLSWMQSPDLESSKCLTQGCCYPQAWILACSAALLQALASSDLQGSLDRVNYSRGLGPRVRLFVFPDTVGSTRKSGSTGNICSVMLNVATGCVRIEK.

This is an uncharacterized protein from Homo sapiens (Human).